The following is a 588-amino-acid chain: Transcription factor 7-like 1 (588 aa).

The segment covering methionine 1–aspartate 31 has biased composition (gly residues). Positions methionine 1 to glutamate 74 are CTNNB1-binding. 3 disordered regions span residues methionine 1–tyrosine 101, serine 203–tyrosine 234, and leucine 409–threonine 506. Residues serine 67–aspartate 81 show a composition bias toward low complexity. Positions glutamate 83 to tyrosine 101 are enriched in basic and acidic residues. Positions valine 346–serine 414 form a DNA-binding region, HMG box. A Nuclear localization signal motif is present at residues lysine 421–arginine 427. Composition is skewed to low complexity over residues leucine 431 to glutamine 441 and serine 478 to serine 497.

It belongs to the TCF/LEF family. In terms of assembly, binds the armadillo repeat of CTNNB1 and forms a stable complex. Interacts with DAZAP2. As to expression, detected in hair follicles and skin keratinocytes, and at lower levels in stomach epithelium.

The protein resides in the nucleus. Functionally, participates in the Wnt signaling pathway. Binds to DNA and acts as a repressor in the absence of CTNNB1, and as an activator in its presence. Necessary for the terminal differentiation of epidermal cells, the formation of keratohyalin granules and the development of the barrier function of the epidermis. Down-regulates NQO1, leading to increased mitomycin c resistance. This is Transcription factor 7-like 1 (TCF7L1) from Homo sapiens (Human).